Consider the following 423-residue polypeptide: D-threonate kinase (423 aa).

Substrate contacts are provided by residues Asp9, Arg51, and 81 to 84 (KIDS). Residues Ser245, 355–358 (GGDI), and Gly401 each bind ATP.

The protein belongs to the four-carbon acid sugar kinase family.

It carries out the reaction D-threonate + ATP = 4-O-phospho-D-threonate + ADP + H(+). Catalyzes the ATP-dependent phosphorylation of D-threonate to D-threonate 4-phosphate. Can also phosphorylate 4-hydroxy-L-threonine, with lower efficiency. This side reaction may serve to deal with the toxicity of 4-hydroxy-L-threonine by converting it into 4-hydroxy-L-threonine 4-phosphate, a useful product that can be used by PdxA2. This is D-threonate kinase from Salmonella typhimurium (strain LT2 / SGSC1412 / ATCC 700720).